Reading from the N-terminus, the 70-residue chain is ATP synthase subunit c (70 aa).

A run of 2 helical transmembrane segments spans residues 4–24 (IAAA…NGLI) and 45–65 (LMFI…VIAF).

The protein belongs to the ATPase C chain family. As to quaternary structure, F-type ATPases have 2 components, F(1) - the catalytic core - and F(0) - the membrane proton channel. F(1) has five subunits: alpha(3), beta(3), gamma(1), delta(1), epsilon(1). F(0) has three main subunits: a(1), b(2) and c(10-14). The alpha and beta chains form an alternating ring which encloses part of the gamma chain. F(1) is attached to F(0) by a central stalk formed by the gamma and epsilon chains, while a peripheral stalk is formed by the delta and b chains.

The protein resides in the cell membrane. Its function is as follows. F(1)F(0) ATP synthase produces ATP from ADP in the presence of a proton or sodium gradient. F-type ATPases consist of two structural domains, F(1) containing the extramembraneous catalytic core and F(0) containing the membrane proton channel, linked together by a central stalk and a peripheral stalk. During catalysis, ATP synthesis in the catalytic domain of F(1) is coupled via a rotary mechanism of the central stalk subunits to proton translocation. Functionally, key component of the F(0) channel; it plays a direct role in translocation across the membrane. A homomeric c-ring of between 10-14 subunits forms the central stalk rotor element with the F(1) delta and epsilon subunits. The polypeptide is ATP synthase subunit c (Bacillus licheniformis (strain ATCC 14580 / DSM 13 / JCM 2505 / CCUG 7422 / NBRC 12200 / NCIMB 9375 / NCTC 10341 / NRRL NRS-1264 / Gibson 46)).